Reading from the N-terminus, the 400-residue chain is MSSKLVLVLNCGSSSLKFAIIDATNGEEHISGLAECFHLPEARIKWKVDGGKQEAALGAGAAHSEALNFIVNTILAQKPALSAQLTAIGHRIVHGGEKFTSSVIVTDDVIQGIKDSIPFAPLHNPAHLIGIAEALKSFPNLADKNVAVFDTAFHQTMPEESYLYALPYSLYKDHGIRRYGAHGTSHFYVSQEAAKILNKPLEELNVITCHLGNGGSVTAVRNGKCVDTSMGLTPLEGLVMGTRSGDLDPAIIFHLHDAMGMSVDQINTLLTKESGLLGLTEVTSDCRYVEDNYATKADAKRAMDVFCHRLAKYIGSYTALMDGRLDAVVFTGGIGENAAMVRELTLDKLGLLGFEIDHERNMAARFGKSGTITKDSSRLALVIPTNEELVIAQDAARLTA.

N10 is a Mg(2+) binding site. Position 17 (K17) interacts with ATP. R91 is a substrate binding site. D150 acts as the Proton donor/acceptor in catalysis. ATP is bound by residues 210–214 (HLGNG), 285–287 (DCR), and 333–337 (GIGEN). E387 provides a ligand contact to Mg(2+).

This sequence belongs to the acetokinase family. As to quaternary structure, homodimer. Requires Mg(2+) as cofactor. The cofactor is Mn(2+).

It is found in the cytoplasm. It carries out the reaction acetate + ATP = acetyl phosphate + ADP. It functions in the pathway metabolic intermediate biosynthesis; acetyl-CoA biosynthesis; acetyl-CoA from acetate: step 1/2. In terms of biological role, catalyzes the formation of acetyl phosphate from acetate and ATP. Can also catalyze the reverse reaction. The polypeptide is Acetate kinase (Yersinia pseudotuberculosis serotype I (strain IP32953)).